We begin with the raw amino-acid sequence, 194 residues long: Putative NAD(P)H nitroreductase YfhC (194 aa).

FMN contacts are provided by residues R20–S22, K147–I148, and R188.

Belongs to the nitroreductase family. Requires FMN as cofactor.

In Bacillus subtilis (strain 168), this protein is Putative NAD(P)H nitroreductase YfhC (yfhC).